Reading from the N-terminus, the 317-residue chain is Transaldolase (317 aa).

The active-site Schiff-base intermediate with substrate is the Lys132.

The protein belongs to the transaldolase family. Type 1 subfamily. In terms of assembly, homodimer.

Its subcellular location is the cytoplasm. It catalyses the reaction D-sedoheptulose 7-phosphate + D-glyceraldehyde 3-phosphate = D-erythrose 4-phosphate + beta-D-fructose 6-phosphate. It participates in carbohydrate degradation; pentose phosphate pathway; D-glyceraldehyde 3-phosphate and beta-D-fructose 6-phosphate from D-ribose 5-phosphate and D-xylulose 5-phosphate (non-oxidative stage): step 2/3. Its function is as follows. Transaldolase is important for the balance of metabolites in the pentose-phosphate pathway. The polypeptide is Transaldolase (Histophilus somni (strain 129Pt) (Haemophilus somnus)).